Consider the following 155-residue polypeptide: D-aminoacyl-tRNA deacylase (155 aa).

Residues 147–148 (GP) carry the Gly-cisPro motif, important for rejection of L-amino acids motif.

Belongs to the DTD family. Homodimer.

It localises to the cytoplasm. The enzyme catalyses glycyl-tRNA(Ala) + H2O = tRNA(Ala) + glycine + H(+). The catalysed reaction is a D-aminoacyl-tRNA + H2O = a tRNA + a D-alpha-amino acid + H(+). Its function is as follows. An aminoacyl-tRNA editing enzyme that deacylates mischarged D-aminoacyl-tRNAs. Also deacylates mischarged glycyl-tRNA(Ala), protecting cells against glycine mischarging by AlaRS. Acts via tRNA-based rather than protein-based catalysis; rejects L-amino acids rather than detecting D-amino acids in the active site. By recycling D-aminoacyl-tRNA to D-amino acids and free tRNA molecules, this enzyme counteracts the toxicity associated with the formation of D-aminoacyl-tRNA entities in vivo and helps enforce protein L-homochirality. In Corynebacterium urealyticum (strain ATCC 43042 / DSM 7109), this protein is D-aminoacyl-tRNA deacylase.